Consider the following 382-residue polypeptide: Putative acetyl-CoA C-acetyltransferase VraB (382 aa).

The Acyl-thioester intermediate role is filled by cysteine 86. The active-site Proton acceptor is the histidine 338.

This sequence belongs to the thiolase-like superfamily. Thiolase family.

The sequence is that of Putative acetyl-CoA C-acetyltransferase VraB (vraB) from Staphylococcus epidermidis (strain ATCC 12228 / FDA PCI 1200).